We begin with the raw amino-acid sequence, 348 residues long: 5-deoxyribose 1-phosphate isomerase (348 aa).

Substrate-binding positions include 49 to 51 (RGA), Arg92, and Gln199. Asp240 functions as the Proton donor in the catalytic mechanism. 250–251 (NK) lines the substrate pocket.

The protein belongs to the EIF-2B alpha/beta/delta subunits family. DrdI subfamily. As to quaternary structure, homodimer.

The enzyme catalyses 5-deoxy-alpha-D-ribose 1-phosphate = 5-deoxy-D-ribulose 1-phosphate. The catalysed reaction is 5-(methylsulfanyl)-alpha-D-ribose 1-phosphate = 5-(methylsulfanyl)-D-ribulose 1-phosphate. The protein operates within carbohydrate degradation. Catalyzes the isomerization of 5-deoxy-alpha-D-ribose 1-phosphate to 5-deoxy-D-ribulose 1-phosphate, as part of a 5-deoxyribose salvage pathway that recycles this toxic radical SAM enzyme by-product to mainstream metabolites. Also seems to be able to catalyze the conversion of methylthioribose-1-phosphate (MTR-1-P) into methylthioribulose-1-phosphate (MTRu-1-P). However this enzyme may not function in methionine salvage in B.thuringiensis since it exists a paralog (MtnA) present in the methionine salvage pathway cluster. This chain is 5-deoxyribose 1-phosphate isomerase, found in Bacillus thuringiensis serovar kurstaki (strain ATCC 35866 / NRRL B-4488 / HD73).